The following is a 1654-amino-acid chain: Cortactin-binding protein 2 (1654 aa).

Residues Met-1–Phe-31 form a disordered region. Residues Arg-119 to Lys-276 adopt a coiled-coil conformation. 3 disordered regions span residues Ser-361 to Pro-432, Gly-455 to Arg-480, and Gln-495 to Asn-596. Low complexity predominate over residues Ser-368 to Ser-379. Polar residues-rich tracts occupy residues Asn-384–Thr-395 and Gln-411–Gln-422. At Arg-499 the chain carries Asymmetric dimethylarginine. Residues Asp-518–Lys-531 show a composition bias toward polar residues. ANK repeat units follow at residues Gly-710 to Tyr-740, Asp-744 to Ala-773, Asn-777 to His-806, Gly-810 to Val-839, Asp-843 to Gly-872, and Glu-913 to Arg-943. The disordered stretch occupies residues Gly-1454 to Pro-1478. Ser-1523 is modified (phosphoserine). Positions Arg-1556–Lys-1654 are disordered. A compositionally biased stretch (polar residues) spans Lys-1581–Lys-1598. Residues Ser-1623–Gln-1637 are compositionally biased toward low complexity. Residues Ser-1644–Lys-1654 show a composition bias toward basic and acidic residues.

As to quaternary structure, interacts with CTTN/cortactin SH3 domain. Interacts with STRN, STRN4/zinedin and MOB4/phocein; this interactions mediate the association with the STRIPAK core complex and may regulate dendritic spine distribution of the STRIPAK complex in hippocampal neurons. Activation of glutamate receptors weakens the interaction with STRN and STRN4.

Its subcellular location is the cytoplasm. It localises to the cell cortex. The protein localises to the cell projection. It is found in the dendritic spine. Functionally, regulates the dendritic spine distribution of CTTN/cortactin in hippocampal neurons, and thus controls dendritic spinogenesis and dendritic spine maintenance. Associates with the striatin-interacting phosphatase and kinase (STRIPAK) core complex to regulate dendritic spine distribution of the STRIPAK complex in hippocampal neurons. The polypeptide is Cortactin-binding protein 2 (CTTNBP2) (Atelerix albiventris (Middle-African hedgehog)).